The following is a 201-amino-acid chain: Elongation factor Ts (201 aa).

The involved in Mg(2+) ion dislocation from EF-Tu stretch occupies residues 83–86 (TDFV).

This sequence belongs to the EF-Ts family.

The protein resides in the cytoplasm. Functionally, associates with the EF-Tu.GDP complex and induces the exchange of GDP to GTP. It remains bound to the aminoacyl-tRNA.EF-Tu.GTP complex up to the GTP hydrolysis stage on the ribosome. The protein is Elongation factor Ts of Methylacidiphilum infernorum (isolate V4) (Methylokorus infernorum (strain V4)).